The chain runs to 72 residues: Translation initiation factor IF-1 (72 aa).

Positions 1–72 constitute an S1-like domain; sequence MAKEKDTIRT…PTRGRIVYRK (72 aa).

The protein belongs to the IF-1 family. Component of the 30S ribosomal translation pre-initiation complex which assembles on the 30S ribosome in the order IF-2 and IF-3, IF-1 and N-formylmethionyl-tRNA(fMet); mRNA recruitment can occur at any time during PIC assembly.

Its subcellular location is the cytoplasm. In terms of biological role, one of the essential components for the initiation of protein synthesis. Stabilizes the binding of IF-2 and IF-3 on the 30S subunit to which N-formylmethionyl-tRNA(fMet) subsequently binds. Helps modulate mRNA selection, yielding the 30S pre-initiation complex (PIC). Upon addition of the 50S ribosomal subunit IF-1, IF-2 and IF-3 are released leaving the mature 70S translation initiation complex. The chain is Translation initiation factor IF-1 from Thermus thermophilus (strain ATCC BAA-163 / DSM 7039 / HB27).